The primary structure comprises 358 residues: Isopentenyl-diphosphate delta-isomerase (358 aa).

12 to 13 (RK) is a binding site for substrate. Residues 69–71 (AMT), Ser-99, and Asn-128 contribute to the FMN site. Gln-158 contributes to the substrate binding site. Residue Glu-159 coordinates Mg(2+). FMN-binding positions include Lys-190, Thr-220, 267-269 (GIR), and 288-289 (AG).

It belongs to the IPP isomerase type 2 family. In terms of assembly, homooctamer. Dimer of tetramers. Requires FMN as cofactor. NADPH is required as a cofactor. It depends on Mg(2+) as a cofactor.

The protein localises to the cytoplasm. It carries out the reaction isopentenyl diphosphate = dimethylallyl diphosphate. Its function is as follows. Involved in the biosynthesis of isoprenoids. Catalyzes the 1,3-allylic rearrangement of the homoallylic substrate isopentenyl (IPP) to its allylic isomer, dimethylallyl diphosphate (DMAPP). The chain is Isopentenyl-diphosphate delta-isomerase from Listeria monocytogenes serotype 4a (strain HCC23).